A 144-amino-acid chain; its full sequence is INO80 complex subunit 5 (144 aa).

Positions 1-58 are disordered; that stretch reads MAAQKKQGERVLPARSTRKRRQLPDMLYYDERTDSYVTPQERSLSEANAQTRPAPNTI. Positions 35–58 are enriched in polar residues; the sequence is SYVTPQERSLSEANAQTRPAPNTI.

Component of the INO80 chromatin remodeling complex.

The protein resides in the nucleus. Its function is as follows. Component of the INO80 complex which remodels chromatin by shifting nucleosomes and is involved in DNA repair. This chain is INO80 complex subunit 5 (iec5), found in Schizosaccharomyces pombe (strain 972 / ATCC 24843) (Fission yeast).